The primary structure comprises 248 residues: MLFFNSILNDAPSSWALYFQDGASPSYLGVTHLNDYLMFYLTFIFIGVIYAICKAVIEYNYNSHPIAAKYTTHGSIVEFIWTLIPALILILVALPSFKLLYLLDEVQKPSMTVKAIGRQWFWTYELNDFVTNENEPVSFDSYMVPEEDLEEGSLRQLEVDNRLVLPIDTRIRLILTSGDVIHSWAVPSLGIKCDCIPGRLNQVSLSIDREGLFYGQCSELCGVLHSSMPIVVQGVSLEDFLAWLEENS.

Residues 1–36 lie on the Mitochondrial intermembrane side of the membrane; that stretch reads MLFFNSILNDAPSSWALYFQDGASPSYLGVTHLNDY. A helical membrane pass occupies residues 37–57; sequence LMFYLTFIFIGVIYAICKAVI. The Mitochondrial matrix segment spans residues 58–75; sequence EYNYNSHPIAAKYTTHGS. The helical transmembrane segment at 76–100 threads the bilayer; that stretch reads IVEFIWTLIPALILILVALPSFKLL. The Mitochondrial intermembrane portion of the chain corresponds to 101–248; it reads YLLDEVQKPS…DFLAWLEENS (148 aa). Cu cation-binding residues include H182, C217, E219, C221, H225, and M228. E219 is a binding site for Mg(2+).

Belongs to the cytochrome c oxidase subunit 2 family. As to quaternary structure, component of the cytochrome c oxidase (complex IV, CIV), a multisubunit enzyme composed of a catalytic core of 3 subunits and several supernumerary subunits. The complex exists as a monomer or a dimer and forms supercomplexes (SCs) in the inner mitochondrial membrane with ubiquinol-cytochrome c oxidoreductase (cytochrome b-c1 complex, complex III, CIII). Cu cation serves as cofactor.

The protein localises to the mitochondrion inner membrane. It carries out the reaction 4 Fe(II)-[cytochrome c] + O2 + 8 H(+)(in) = 4 Fe(III)-[cytochrome c] + 2 H2O + 4 H(+)(out). Component of the cytochrome c oxidase, the last enzyme in the mitochondrial electron transport chain which drives oxidative phosphorylation. The respiratory chain contains 3 multisubunit complexes succinate dehydrogenase (complex II, CII), ubiquinol-cytochrome c oxidoreductase (cytochrome b-c1 complex, complex III, CIII) and cytochrome c oxidase (complex IV, CIV), that cooperate to transfer electrons derived from NADH and succinate to molecular oxygen, creating an electrochemical gradient over the inner membrane that drives transmembrane transport and the ATP synthase. Cytochrome c oxidase is the component of the respiratory chain that catalyzes the reduction of oxygen to water. Electrons originating from reduced cytochrome c in the intermembrane space (IMS) are transferred via the dinuclear copper A center (CU(A)) of subunit 2 and heme A of subunit 1 to the active site in subunit 1, a binuclear center (BNC) formed by heme A3 and copper B (CU(B)). The BNC reduces molecular oxygen to 2 water molecules using 4 electrons from cytochrome c in the IMS and 4 protons from the mitochondrial matrix. This Schizosaccharomyces pombe (strain 972 / ATCC 24843) (Fission yeast) protein is Cytochrome c oxidase subunit 2 (cox2).